The chain runs to 514 residues: Threonine synthase (514 aa).

An N6-(pyridoxal phosphate)lysine modification is found at lysine 117. Residues glycine 270, asparagine 271, phenylalanine 272, and aspartate 274 each contribute to the pyridoxal 5'-phosphate site. Residues serine 319 and serine 321 each carry the phosphoserine modification. Threonine 449 serves as a coordination point for pyridoxal 5'-phosphate.

This sequence belongs to the threonine synthase family. It depends on pyridoxal 5'-phosphate as a cofactor.

It catalyses the reaction O-phospho-L-homoserine + H2O = L-threonine + phosphate. Its pathway is amino-acid biosynthesis; L-threonine biosynthesis; L-threonine from L-aspartate: step 5/5. Functionally, catalyzes the gamma-elimination of phosphate from L-phosphohomoserine and the beta-addition of water to produce L-threonine. This is Threonine synthase (thrc) from Schizosaccharomyces pombe (strain 972 / ATCC 24843) (Fission yeast).